A 113-amino-acid chain; its full sequence is Small ribosomal subunit protein bS6 (113 aa).

The protein belongs to the bacterial ribosomal protein bS6 family.

In terms of biological role, binds together with bS18 to 16S ribosomal RNA. In Synechocystis sp. (strain ATCC 27184 / PCC 6803 / Kazusa), this protein is Small ribosomal subunit protein bS6 (rpsF).